Reading from the N-terminus, the 196-residue chain is Glycerol-3-phosphate acyltransferase (196 aa).

A run of 4 helical transmembrane segments spans residues 4–24, 70–90, 111–131, and 152–172; these read IYIA…GLIL, VLIA…LGAF, IGVL…LWLA, and IFLW…LTLL.

Belongs to the PlsY family. Probably interacts with PlsX.

The protein resides in the cell inner membrane. It carries out the reaction an acyl phosphate + sn-glycerol 3-phosphate = a 1-acyl-sn-glycero-3-phosphate + phosphate. Its pathway is lipid metabolism; phospholipid metabolism. Its function is as follows. Catalyzes the transfer of an acyl group from acyl-phosphate (acyl-PO(4)) to glycerol-3-phosphate (G3P) to form lysophosphatidic acid (LPA). This enzyme utilizes acyl-phosphate as fatty acyl donor, but not acyl-CoA or acyl-ACP. The chain is Glycerol-3-phosphate acyltransferase from Rhodopseudomonas palustris (strain BisB5).